The chain runs to 348 residues: Guanosine ABC transporter permease protein NupP (348 aa).

9 consecutive transmembrane segments (helical) span residues 8–28 (LLVP…IMLV), 61–81 (YILS…NIGV), 85–105 (LLVG…PAYI), 107–127 (LPLA…IPGI), 136–156 (EVIV…YIIS), 189–209 (LHLG…IINK), 237–257 (IMTS…MEGL), 277–297 (IAVA…ACLL), and 320–340 (IVIA…FVMG).

This sequence belongs to the binding-protein-dependent transport system permease family. As to quaternary structure, the complex is composed of two ATP-binding proteins (NupO), two transmembrane proteins (NupP and NupQ) and a solute-binding protein (NupN).

It localises to the cell membrane. Its function is as follows. Part of an ABC transporter complex involved in the uptake of guanosine. Responsible for the translocation of the substrate across the membrane. May be a nucleoside transporter of broad specificity but with various affinities for different substrates. The protein is Guanosine ABC transporter permease protein NupP of Bacillus subtilis (strain 168).